The following is a 77-amino-acid chain: Large ribosomal subunit protein uL24 (77 aa).

It belongs to the universal ribosomal protein uL24 family. In terms of assembly, part of the 50S ribosomal subunit.

Its function is as follows. One of two assembly initiator proteins, it binds directly to the 5'-end of the 23S rRNA, where it nucleates assembly of the 50S subunit. Functionally, one of the proteins that surrounds the polypeptide exit tunnel on the outside of the subunit. This chain is Large ribosomal subunit protein uL24, found in Campylobacter jejuni subsp. doylei (strain ATCC BAA-1458 / RM4099 / 269.97).